A 1054-amino-acid polypeptide reads, in one-letter code: DIS3-like exonuclease 1 (1054 aa).

Residues 236–309 (AGIKSGRYIQ…PKNEWKGRTV (74 aa)) form the CSD1 domain. The CSD2 domain maps to 365–431 (ILVTPWDYRI…GEIATILVEN (67 aa)). Residues 465–816 (RKDLRKSHLV…VHRLLMAAIS (352 aa)) form the RNB domain. Ser989 is modified (phosphoserine).

The protein belongs to the RNR ribonuclease family. In terms of assembly, component of the RNA exosome complex. The catalytically inactive RNA exosome core (Exo-9) complex is believed to associate with catalytic subunits EXOSC10, and DIS3 or DIS3L in cytoplasmic- and nuclear-specific RNA exosome complex forms. It depends on Mg(2+) as a cofactor.

It localises to the cytoplasm. It carries out the reaction Exonucleolytic cleavage in the 3'- to 5'-direction to yield nucleoside 5'-phosphates.. In terms of biological role, catalytic component of the RNA exosome complex which has 3'-&gt;5' exoribonuclease activity and participates in a multitude of cellular RNA processing and degradation events. In the cytoplasm, the RNA exosome complex is involved in general mRNA turnover and specifically degrades inherently unstable mRNAs containing AU-rich elements (AREs) within their 3' untranslated regions, and in RNA surveillance pathways, preventing translation of aberrant mRNAs. It seems to be involved in degradation of histone mRNA. The polypeptide is DIS3-like exonuclease 1 (DIS3L) (Homo sapiens (Human)).